The sequence spans 399 residues: Transmembrane protein 237 homolog (399 aa).

Residues 1 to 11 (MPPTSRPVPPP) show a composition bias toward pro residues. Residues 1–158 (MPPTSRPVPP…PHDKRNMPAK (158 aa)) are disordered. 3 stretches are compositionally biased toward basic and acidic residues: residues 36-45 (NQQRRFRENN), 111-135 (EAAKHSREDPSGETVEVRRPNDPRR), and 144-158 (KSFRDPHDKRNMPAK). The next 4 helical transmembrane spans lie at 222–242 (IANIIQGFLAGISVMLAIFSF), 256–276 (MSLPIHAGFMVAFTVGLVSAI), 301–321 (GLITFIVWFVGLVSTLLCIQL), and 343–363 (VFNVLRALTSGLGFLLLAFKP).

It belongs to the TMEM237 family.

It localises to the membrane. It is found in the cell projection. Its subcellular location is the cilium. Functionally, component of the transition zone in primary cilia. Required for ciliogenesis. The polypeptide is Transmembrane protein 237 homolog (Caenorhabditis elegans).